Consider the following 555-residue polypeptide: Glypican-6 (555 aa).

The first 23 residues, 1-23 (MPSWIRAVILPLSGLLLTLPAAA), serve as a signal peptide directing secretion. Positions 348 to 357 (PALRSARSAP) are enriched in low complexity. 2 disordered regions span residues 348-376 (PALR…PTTA) and 480-501 (GNDV…GSGC). The GPI-anchor amidated serine moiety is linked to residue S530. Positions 531-555 (ASKFSSSLISWSLVCMVLALQRLYR) are cleaved as a propeptide — removed in mature form.

The protein belongs to the glypican family. In the cartilage growth-plate, gradient of expression with highest levels from the proliferative and pre-hypertrophic zones to lowest, if any, in the hypertrophic zones (at protein level).

Its subcellular location is the cell membrane. It is found in the secreted. The protein localises to the extracellular space. Cell surface proteoglycan that bears heparan sulfate. Putative cell surface coreceptor for growth factors, extracellular matrix proteins, proteases and anti-proteases. Enhances migration and invasion of cancer cells through WNT5A signaling. This is Glypican-6 (Gpc6) from Mus musculus (Mouse).